A 496-amino-acid polypeptide reads, in one-letter code: Probable E3 ubiquitin-protein ligase XBOS32 (496 aa).

ANK repeat units follow at residues 50–79, 83–112, 117–147, 180–209, and 223–252; these read GRNSPLHYAAAQGHHEIVSLLLESGVEINL, RGQTALMQACQYGHWEVVQTLMLFNANVHR, NGGSALHFAALHGHARCLRLVLADYVPSMPN, GGLTPLHMAALNGHVECVQLLLDLGASVIE, and AGSTPLHYAACGGNAVCCQLLIARGASLSA. An RING-type zinc finger spans residues 321–368; that stretch reads CAVCLEGSCSVAAEGCKHEFCTRCALYLCSTSYTSVSPAGAIPCPLCR.

It carries out the reaction S-ubiquitinyl-[E2 ubiquitin-conjugating enzyme]-L-cysteine + [acceptor protein]-L-lysine = [E2 ubiquitin-conjugating enzyme]-L-cysteine + N(6)-ubiquitinyl-[acceptor protein]-L-lysine.. It participates in protein modification; protein ubiquitination. In Oryza sativa subsp. japonica (Rice), this protein is Probable E3 ubiquitin-protein ligase XBOS32 (XBOS32).